The chain runs to 221 residues: Cytidylate kinase 1 (221 aa).

Residue 7–15 (GPSASGKSS) participates in ATP binding.

This sequence belongs to the cytidylate kinase family. Type 1 subfamily.

The protein resides in the cytoplasm. The catalysed reaction is CMP + ATP = CDP + ADP. It catalyses the reaction dCMP + ATP = dCDP + ADP. In Borreliella afzelii (strain PKo) (Borrelia afzelii), this protein is Cytidylate kinase 1.